A 500-amino-acid polypeptide reads, in one-letter code: MNSISALFSAGGFQWILLSLSLAFIVVYSLFYLAVGLYNLYFHPLARYPGPLLGRASSLWYARSLARGTVAQDTLKLHEKYGDVVRIAPDELSFIQPENWSAIYGHQLGKDYRELIKDPRYHDTVKPTPTILTGDWDEHTFYRKILSNSFSEKSLKDQEHILHHFVDLFVQRLKETSAEGTRELNMTDQWNYLTFDVIGFLTYGEEFHCLTSSKLHDWIEAMLCVAILMSLGQAARHLPFPFDKIYKQWAIPSNVKRQVALHRDLTEVAIPHIPIQYASAYRLNSRKGDIPYSVLKEHANILTIGGSETTATLLAGATFHLGKNPPVLQKLATEIRTTFVNDGEITVARLSECKYLLATVEECLRIYPPSPANHTRMVPKEGIVLNDQHIPGGIGVGMPMYAAFRASSNFTYPDRFAPERWLGDPMYSKDKKGALQPFSFGPRNCLGRHLAYQEIKLALAKLVYHFDLELNPKCGDWDEQKNFTFWVKPPLWVNLHPVKS.

Residues 15–35 traverse the membrane as a helical segment; the sequence is WILLSLSLAFIVVYSLFYLAV. N-linked (GlcNAc...) asparagine glycans are attached at residues Asn-99, Asn-185, Asn-373, and Asn-409. Residue Cys-445 participates in heme binding. N-linked (GlcNAc...) asparagine glycosylation is present at Asn-482.

Belongs to the cytochrome P450 family. Heme is required as a cofactor.

It localises to the membrane. The protein operates within secondary metabolite biosynthesis. Its function is as follows. Cytochrome P450 monooxygenase; part of the gene cluster that mediates the biosynthesis of heptelidic acid (HA), a sesquiterpene lactone that acts as an inhibitor of glyceraldehyde-3-phosphatedehydrogenase (GAPDH) and a growth inhibitor of the salt-tolerant lactic acid bacteria in soy sauce brewing. This Aspergillus oryzae (strain ATCC 42149 / RIB 40) (Yellow koji mold) protein is Cytochrome P450 monooxygenase hepD.